Here is a 126-residue protein sequence, read N- to C-terminus: MAFPTTSAQQAETNRKILEEIQTKKQLLAGGIINLGLSPPNQMPAPQLLGQPTTVNPDFQAGVGIATNATSTTRSAFNPTSSTTLGFFIPQDSYFGNSFIPVLPRLEPLPSPATTPTAPPSHSISK.

A disordered region spans residues 106–126 (LEPLPSPATTPTAPPSHSISK). Positions 107–119 (EPLPSPATTPTAP) are enriched in pro residues.

The protein belongs to the SOSS-C family.

The chain is SOSS complex subunit C homolog from Drosophila sechellia (Fruit fly).